Consider the following 544-residue polypeptide: Chaperonin GroEL (544 aa).

ATP contacts are provided by residues 30 to 33, K51, 87 to 91, G415, 481 to 483, and D497; these read TLGP, DGTTT, and DAL.

The protein belongs to the chaperonin (HSP60) family. Forms a cylinder of 14 subunits composed of two heptameric rings stacked back-to-back. Interacts with the co-chaperonin GroES.

It localises to the cytoplasm. The enzyme catalyses ATP + H2O + a folded polypeptide = ADP + phosphate + an unfolded polypeptide.. Together with its co-chaperonin GroES, plays an essential role in assisting protein folding. The GroEL-GroES system forms a nano-cage that allows encapsulation of the non-native substrate proteins and provides a physical environment optimized to promote and accelerate protein folding. This is Chaperonin GroEL from Chlamydia felis (strain Fe/C-56) (Chlamydophila felis).